A 292-amino-acid polypeptide reads, in one-letter code: Medium chain reductase/dehydrogenase ucsI (292 aa).

Residue cysteine 43 coordinates Zn(2+). Tyrosine 49 contacts substrate. The Zn(2+) site is built by histidine 65 and glutamate 66. NAD(+) contacts are provided by residues 184–189 (GCGPVG), aspartate 208, arginine 213, and 276–278 (IGA).

Belongs to the zinc-containing alcohol dehydrogenase family. Zn(2+) is required as a cofactor.

The protein operates within mycotoxin biosynthesis. Its function is as follows. Medium chain reductase/dehydrogenase; part of the gene cluster that mediates the biosynthesis of UCS1025A, a member of the pyrrolizidinone family that acts as a strong telomerase inhibitor and displays potent antibacterial and antitumor properties. These compounds share a hemiaminal-containing pyrrolizidinone core fused with a gamma-lactone, giving a furopyrrolizidine that is connected to a decalin fragment. The polyketide synthase module (PKS) of the PKS-NRPS ucsA is responsible for the synthesis of the polyketide backbone via the condensation of an acetyl-CoA starter unit with 6 malonyl-CoA units. The downstream nonribosomal peptide synthetase (NRPS) module then amidates the carboxyl end of the polyketide with a 2S,3S-methylproline derived from L-isoleucine by the 2-oxoglutarate-dependent dioxygenase ucsF which converts L-isoleucine to (4S,5S)-4-methylpyrroline-5-carboxylate that is further converted to 2S,3S-methylproline by the pyrroline-5-carboxylate reductase ucsG. Reductive release of the completed aminoacyl polyketide from the assembly line can form the 3-pyrrolin-2-one structure via an intramolecular Knoevenagel reaction. Because ucsA lacks a designated enoylreductase (ER) domain, the required activity is provided the enoyl reductase ucsL. This keto acyclic precursor is the substrate of the Diels-Alderase ucsH, that catalyzes the Diels-Alder cycloaddition. Oxidation of the 3S-methyl group to a carboxylate by the cytochrome P450 monooxygenase ucsK allows an oxa-Michael cyclization that might involve the reductase/dehydrogenase ucsI and which furnishes the furopyrrolizidine. The oxidase ucsJ likely plays a critical role in stereoselective reduction of the C5-C6 double bond to afford the required R-configured carboxylate group. Further enolization and oxidation at C5 by an unidentified enzyme affords the last intermediate that can undergo oxa-Michael cyclization to yield UCS1025A. This is Medium chain reductase/dehydrogenase ucsI from Acremonium sp.